Reading from the N-terminus, the 121-residue chain is Iron-sulfur cluster assembly protein CyaY (121 aa).

It belongs to the frataxin family.

Its function is as follows. Involved in iron-sulfur (Fe-S) cluster assembly. May act as a regulator of Fe-S biogenesis. The polypeptide is Iron-sulfur cluster assembly protein CyaY (Buchnera aphidicola subsp. Schizaphis graminum (strain Sg)).